The following is a 620-amino-acid chain: Transcription factor GTE11 (620 aa).

The tract at residues 1 to 35 is disordered; the sequence is MTVRNGGFPGDYNRNSFDSPGGCDDSPNASKDDET. The Bromo domain maps to 124–230; that stretch reads TSTMLRMKQC…KFFEVRWKTI (107 aa). The region spanning 270 to 351 is the NET domain; sequence NSLLEPAKRV…EFLRENQKKD (82 aa). The residue at position 417 (serine 417) is a Phosphoserine. The tract at residues 445–620 is transcription activation domain; that stretch reads EKRYRAALLK…GNEVEEGEID (176 aa). A coiled-coil region spans residues 470–544; the sequence is NQNEKRDPET…MEKSVEINEN (75 aa). Disordered regions lie at residues 491-511 and 597-620; these read KKKEKARLQAEAKEAEEARRK and EDEDESDMLAFPDPGNEVEEGEID.

As to quaternary structure, interacts with BT1, BT2 and BT4.

The protein resides in the nucleus. The sequence is that of Transcription factor GTE11 (GTE11) from Arabidopsis thaliana (Mouse-ear cress).